Consider the following 121-residue polypeptide: Large ribosomal subunit protein uL24 (121 aa).

The protein belongs to the universal ribosomal protein uL24 family. Part of the 50S ribosomal subunit.

One of two assembly initiator proteins, it binds directly to the 5'-end of the 23S rRNA, where it nucleates assembly of the 50S subunit. Functionally, located at the polypeptide exit tunnel on the outside of the subunit. The chain is Large ribosomal subunit protein uL24 from Pyrococcus abyssi (strain GE5 / Orsay).